The sequence spans 501 residues: Cytochrome P450 2S1 (501 aa).

Heme is bound at residue Cys441.

This sequence belongs to the cytochrome P450 family. Heme is required as a cofactor.

It localises to the endoplasmic reticulum membrane. Its subcellular location is the microsome membrane. The enzyme catalyses all-trans-retinoate + reduced [NADPH--hemoprotein reductase] + O2 = all-trans-5,6-epoxyretinoate + oxidized [NADPH--hemoprotein reductase] + H2O + H(+). It catalyses the reaction all-trans-retinoate + reduced [NADPH--hemoprotein reductase] + O2 = all-trans-4-hydroxyretinoate + oxidized [NADPH--hemoprotein reductase] + H2O + H(+). The catalysed reaction is (5S)-hydroperoxy-(6E,8Z,11Z,14Z)-eicosatetraenoate = 5-oxo-(6E,8Z,11Z,14Z)-eicosatetraenoate + H2O. It carries out the reaction (12S)-hydroperoxy-(5Z,8Z,10E,14Z)-eicosatetraenoate = 12-oxo-(5Z,8Z,10E,14Z)-eicosatetraenoate + H2O. The enzyme catalyses (15S)-hydroperoxy-(5Z,8Z,11Z,13E)-eicosatetraenoate = 15-oxo-(5Z,8Z,11Z,13E)-eicosatetraenoate + H2O. It catalyses the reaction prostaglandin H2 = thromboxane A2. The catalysed reaction is prostaglandin H2 = (12S)-hydroxy-(5Z,8E,10E)-heptadecatrienoate + malonaldehyde. It carries out the reaction (13S)-hydroperoxy-(9Z,11E)-octadecadienoate = 13-oxo-(9Z,11E)-octadecadienoate + H2O. It functions in the pathway lipid metabolism; fatty acid metabolism. Functionally, a cytochrome P450 monooxygenase involved in the metabolism of retinoids and eicosanoids. In epidermis, may contribute to the oxidative metabolism of all-trans-retinoic acid. For this activity, uses molecular oxygen inserting one oxygen atom into a substrate, and reducing the second into a water molecule, with two electrons provided by NADPH via cytochrome P450 reductase (NADPH--hemoprotein reductase). Additionally, displays peroxidase and isomerase activities toward various oxygenated eicosanoids such as prostaglandin H2 (PGH2) and hydroperoxyeicosatetraenoates (HPETEs). Independently of cytochrome P450 reductase, NADPH, and O2, catalyzes the breakdown of PGH2 to hydroxyheptadecatrienoic acid (HHT) and malondialdehyde (MDA), which is known to act as a mediator of DNA damage. The sequence is that of Cytochrome P450 2S1 (Cyp2s1) from Mus musculus (Mouse).